A 260-amino-acid polypeptide reads, in one-letter code: Cytosolic Fe-S cluster assembly factor Nubp2 homolog 2 (260 aa).

An ATP-binding site is contributed by Gly-14–Ser-21. [4Fe-4S] cluster contacts are provided by Cys-188 and Cys-191.

The protein belongs to the Mrp/NBP35 ATP-binding proteins family. NUBP2/CFD1 subfamily. Heterotetramer of 2 Nubp1 and 2 Nubp2 chains. It depends on [4Fe-4S] cluster as a cofactor.

It is found in the cytoplasm. Its function is as follows. Component of the cytosolic iron-sulfur (Fe/S) protein assembly (CIA) machinery. Required for maturation of extramitochondrial Fe-S proteins. The Nubp1-Nubp2 heterotetramer forms a Fe-S scaffold complex, mediating the de novo assembly of an Fe-S cluster and its transfer to target apoproteins. The polypeptide is Cytosolic Fe-S cluster assembly factor Nubp2 homolog 2 (Drosophila yakuba (Fruit fly)).